Consider the following 552-residue polypeptide: Phosphoglucomutase (552 aa).

S143 functions as the Phosphoserine intermediate in the catalytic mechanism. Residues S143, D295, D297, and D299 each coordinate Mg(2+).

It belongs to the phosphohexose mutase family. Mg(2+) is required as a cofactor.

It carries out the reaction alpha-D-glucose 1-phosphate = alpha-D-glucose 6-phosphate. It participates in glycolipid metabolism; diglucosyl-diacylglycerol biosynthesis. Its function is as follows. Catalyzes the interconversion between glucose-6-phosphate and alpha-glucose-1-phosphate. This is the first step in the biosynthesis of diglucosyl-diacylglycerol (Glc2-DAG), i.e. the predominant glycolipid found in the S.aureus membrane, which is also used as a membrane anchor for lipoteichoic acid (LTA). This is Phosphoglucomutase (pgcA) from Staphylococcus aureus (strain MSSA476).